Reading from the N-terminus, the 165-residue chain is MSLSFSLLKPPLSSSNPNPFLHGTTTKLSLLPSFSALSLSSSPPSSSTTYTFPVIKAMRSMQGKVICATNDKTVNVEVVRLAPHPKYKRRVRKKKKYQAHDPDNQFKVGDWVQLDKCRPISKTKTFLAVAPEGRQSSATRPKPIQAASDELGIPLESQVEGDKTV.

A chloroplast-targeting transit peptide spans 1–57; it reads MSLSFSLLKPPLSSSNPNPFLHGTTTKLSLLPSFSALSLSSSPPSSSTTYTFPVIKA. Residues 128 to 165 form a disordered region; sequence AVAPEGRQSSATRPKPIQAASDELGIPLESQVEGDKTV.

In terms of assembly, component of the chloroplast small ribosomal subunit (SSU). Mature 70S chloroplast ribosomes of higher plants consist of a small (30S) and a large (50S) subunit. The 30S small subunit contains 1 molecule of ribosomal RNA (16S rRNA) and 24 different proteins. The 50S large subunit contains 3 rRNA molecules (23S, 5S and 4.5S rRNA) and 33 different proteins.

It localises to the plastid. The protein resides in the chloroplast. In terms of biological role, component of the chloroplast ribosome (chloro-ribosome), a dedicated translation machinery responsible for the synthesis of chloroplast genome-encoded proteins, including proteins of the transcription and translation machinery and components of the photosynthetic apparatus. The chain is Small ribosomal subunit protein uS17c (RPS17) from Spinacia oleracea (Spinach).